An 80-amino-acid polypeptide reads, in one-letter code: RNA-binding protein KhpA (80 aa).

The 48-residue stretch at 33-80 (GRTVEVHVHPDDLGKVIGRGGRTATALRKLVAGIGGRGIRVDVVDTDQ) folds into the KH domain.

The protein belongs to the KhpA RNA-binding protein family.

The protein localises to the cytoplasm. Its function is as follows. A probable RNA-binding protein. This is RNA-binding protein KhpA from Mycobacterium leprae (strain TN).